Consider the following 359-residue polypeptide: Type II methyltransferase M.HinfI (359 aa).

The RAMA domain maps to 275–358 (KVPMKTLIEA…LDSLRYEYTN (84 aa)).

This sequence belongs to the N(4)/N(6)-methyltransferase family.

It catalyses the reaction a 2'-deoxyadenosine in DNA + S-adenosyl-L-methionine = an N(6)-methyl-2'-deoxyadenosine in DNA + S-adenosyl-L-homocysteine + H(+). In terms of biological role, a beta subtype methylase that recognizes the double-stranded sequence 5'-GANTC-3', methylates A-2 on both strands, and protects the DNA from cleavage by the HinfI endonuclease. In Haemophilus influenzae, this protein is Type II methyltransferase M.HinfI (hinfIM).